Reading from the N-terminus, the 493-residue chain is Cytochrome c-552 (493 aa).

An N-terminal signal peptide occupies residues 1–25 (MEKKLKSWQGWLLSGGSMVVVFVLG). Residue His-116 coordinates heme c. Residues Cys-144, Cys-147, and Lys-148 each contribute to the heme site. Heme c contacts are provided by Cys-182, Cys-185, His-186, Cys-224, Cys-227, and His-228. Positions 230, 231, 276, and 278 each coordinate Ca(2+). Residue Tyr-231 participates in substrate binding. His-279 is a substrate binding site. Residues His-290, Cys-297, Cys-300, His-301, His-315, Cys-328, Cys-331, His-332, and His-407 each coordinate heme c.

The protein belongs to the cytochrome c-552 family. It depends on Ca(2+) as a cofactor. Heme c is required as a cofactor.

It is found in the periplasm. It carries out the reaction 6 Fe(III)-[cytochrome c] + NH4(+) + 2 H2O = 6 Fe(II)-[cytochrome c] + nitrite + 8 H(+). Its pathway is nitrogen metabolism; nitrate reduction (assimilation). Functionally, catalyzes the reduction of nitrite to ammonia, consuming six electrons in the process. This is Cytochrome c-552 from Bacteroides thetaiotaomicron (strain ATCC 29148 / DSM 2079 / JCM 5827 / CCUG 10774 / NCTC 10582 / VPI-5482 / E50).